Reading from the N-terminus, the 229-residue chain is Potassium/proton antiporter CemA (229 aa).

3 helical membrane passes run Phe-7–Phe-27, Ile-107–Gly-127, and Ile-189–Ile-209.

The protein belongs to the CemA family.

The protein resides in the plastid. Its subcellular location is the chloroplast inner membrane. It carries out the reaction K(+)(in) + H(+)(out) = K(+)(out) + H(+)(in). In terms of biological role, contributes to K(+)/H(+) antiport activity by supporting proton efflux to control proton extrusion and homeostasis in chloroplasts in a light-dependent manner to modulate photosynthesis. Prevents excessive induction of non-photochemical quenching (NPQ) under continuous-light conditions. Indirectly promotes efficient inorganic carbon uptake into chloroplasts. This chain is Potassium/proton antiporter CemA, found in Helianthus annuus (Common sunflower).